Here is an 85-residue protein sequence, read N- to C-terminus: Transcriptional repressor protein KorC (85 aa).

The H-T-H motif DNA-binding region spans 28–47 (VLHLAGLTGGQAARILGLGA).

In terms of biological role, acts with KorA as corepressor in the control of the kilC and kilE operons. In Escherichia coli, this protein is Transcriptional repressor protein KorC (korC).